Consider the following 202-residue polypeptide: Securin (202 aa).

Positions Asp-36–Ala-55 are disordered. Residues Arg-61–Leu-64 carry the D-box motif. Short sequence motifs (TEK-box) lie at residues Thr-71–Lys-73 and Thr-94–Lys-96. The SH3-binding motif lies at Pro-163–Leu-173. Ser-165 is modified (phosphoserine; by CDK1).

The protein belongs to the securin family. In terms of assembly, interacts with RPS10 and DNAJA1. Interacts with the caspase-like ESPL1, and prevents its protease activity probably by covering its active site. Interacts with TP53 and blocks its activity probably by blocking its binding to DNA. Interacts with the Ku 70 kDa subunit of ds-DNA kinase. Interacts with PTTG1IP. In terms of processing, phosphorylated at Ser-165 by CDK1 during mitosis. Post-translationally, phosphorylated in vitro by ds-DNA kinase. Ubiquitinated through 'Lys-11' linkage of ubiquitin moieties by the anaphase promoting complex (APC) at the onset of anaphase, conducting to its degradation. 'Lys-11'-linked ubiquitination is mediated by the E2 ligase UBE2C/UBCH10.

It is found in the cytoplasm. The protein localises to the nucleus. Functionally, regulatory protein, which plays a central role in chromosome stability, in the p53/TP53 pathway, and DNA repair. Probably acts by blocking the action of key proteins. During the mitosis, it blocks Separase/ESPL1 function, preventing the proteolysis of the cohesin complex and the subsequent segregation of the chromosomes. At the onset of anaphase, it is ubiquitinated, conducting to its destruction and to the liberation of ESPL1. Its function is however not limited to a blocking activity, since it is required to activate ESPL1. Negatively regulates the transcriptional activity and related apoptosis activity of TP53. The negative regulation of TP53 may explain the strong transforming capability of the protein when it is overexpressed. May also play a role in DNA repair via its interaction with Ku, possibly by connecting DNA damage-response pathways with sister chromatid separation. In Bos taurus (Bovine), this protein is Securin (PTTG1).